Here is a 418-residue protein sequence, read N- to C-terminus: Putative ion-transport protein YfeO (418 aa).

11 helical membrane passes run 9–31 (MLLLSLPAVAIGIASSLILIMVM), 55–77 (SPLWIIGVLTLTGIAVGLVIRFS), 90–112 (LIGAPIPPSALPGLIVALILGLA), 122–140 (PIITVNIALAVAIGARLLP), 147–169 (WTILASAGTIGALFGTPVAAALI), 189–211 (PLMAAAAGALTTGLFFHPHFSLP), 223–244 (ILSGAIVAAIAIAAGMVAVWCL), 259–281 (FVLGIGGFILGILGVIGGPVSLF), 301–323 (YFLLAVIKLAALVVAAASGFRGG), 343–363 (VPAVPAAITVSCAILGIVLVV), and 376–398 (VVVPNTTLLPLLCIVMLPAWLLL).

The protein belongs to the chloride channel (TC 2.A.49) family.

The protein resides in the cell membrane. This Escherichia coli O6:H1 (strain CFT073 / ATCC 700928 / UPEC) protein is Putative ion-transport protein YfeO (yfeO).